We begin with the raw amino-acid sequence, 1343 residues long: Xanthine dehydrogenase (1343 aa).

In terms of domain architecture, 2Fe-2S ferredoxin-type spans 8–95 (SELVFFVNGK…GCAVTTVEGI (88 aa)). The [2Fe-2S] cluster site is built by C47, C52, C55, C77, C117, C120, C152, and C154. Residues 235–424 (FSSERVTWYR…LGIHFQKTTP (190 aa)) form the FAD-binding PCMH-type domain. FAD-binding positions include 263–270 (LVVGNTEV), F343, 353–357 (CLGGN), D366, L414, and K432. Positions 780 and 811 each coordinate Mo-molybdopterin. 2 residues coordinate substrate: E815 and R893. R925 contributes to the Mo-molybdopterin binding site. F927 contacts substrate. A1092 serves as a coordination point for Mo-molybdopterin. Residue E1275 is the Proton acceptor of the active site.

It belongs to the xanthine dehydrogenase family. In terms of assembly, homodimer. FAD is required as a cofactor. It depends on Mo-molybdopterin as a cofactor. [2Fe-2S] cluster serves as cofactor.

Its subcellular location is the peroxisome. It carries out the reaction xanthine + NAD(+) + H2O = urate + NADH + H(+). It catalyses the reaction hypoxanthine + NAD(+) + H2O = xanthine + NADH + H(+). Its function is as follows. Key enzyme in purine degradation. Catalyzes the oxidation of hypoxanthine to xanthine. Catalyzes the oxidation of xanthine to uric acid. In Drosophila pseudoobscura pseudoobscura (Fruit fly), this protein is Xanthine dehydrogenase (ry).